The chain runs to 1116 residues: Cation channel sperm-associated auxiliary subunit beta (1116 aa).

Residues Met1 to Pro1053 lie on the Extracellular side of the membrane. An intrachain disulfide couples Cys35 to Cys60. N-linked (GlcNAc...) asparagine glycosylation is found at Asn90, Asn100, Asn118, Asn226, and Asn321. Residues Cys189 and Cys302 are joined by a disulfide bond. Cys330 and Cys343 are oxidised to a cystine. N-linked (GlcNAc...) asparagine glycans are attached at residues Asn618 and Asn690. Disulfide bonds link Cys718–Cys816, Cys829–Cys1037, Cys911–Cys920, and Cys922–Cys937. Asn913 and Asn921 each carry an N-linked (GlcNAc...) asparagine glycan. Asn1010 and Asn1015 each carry an N-linked (GlcNAc...) asparagine glycan. A helical membrane pass occupies residues Phe1054 to Phe1076. At Met1077–Glu1116 the chain is on the cytoplasmic side.

In terms of assembly, component of the CatSper complex or CatSpermasome composed of the core pore-forming members CATSPER1, CATSPER2, CATSPER3 and CATSPER4 as well as auxiliary members CATSPERB, CATSPERG, CATSPERD, CATSPERE, CATSPERZ, C2CD6/CATSPERT, TMEM249, TMEM262 and EFCAB9. HSPA1 may be an additional auxiliary complex member. The core complex members CATSPER1, CATSPER2, CATSPER3 and CATSPER4 form a heterotetrameric channel. The auxiliary CATSPERB, CATSPERG, CATSPERD and CATSPERE subunits form a pavilion-like structure over the pore which stabilizes the complex through interactions with CATSPER4, CATSPER3, CATSPER1 and CATSPER2 respectively. TMEM262/CATSPERH interacts with CATSPERB, further stabilizing the complex. C2CD6/CATSPERT interacts at least with CATSPERD and is required for targeting the CatSper complex in the flagellar membrane.

It localises to the cell projection. The protein localises to the cilium. It is found in the flagellum membrane. Functionally, auxiliary component of the CatSper complex, a complex involved in sperm cell hyperactivation. Sperm cell hyperactivation is needed for sperm motility which is essential late in the preparation of sperm for fertilization. In Homo sapiens (Human), this protein is Cation channel sperm-associated auxiliary subunit beta.